A 203-amino-acid polypeptide reads, in one-letter code: Membrane-spanning 4-domains subfamily A member 13 (203 aa).

4 helical membrane-spanning segments follow: residues 15–35 (VLGVIQIMIGIYHVLMWYFLL), 56–76 (MGTSLWGFAFVISGAFTVKAA), 84–104 (ILCTMSLNILCIIITIVAASL), and 141–161 (FAIALLYSISSCAYLPLSSIV).

Belongs to the MS4A family.

The protein localises to the membrane. In terms of biological role, may be involved in signal transduction as a component of a multimeric receptor complex. The polypeptide is Membrane-spanning 4-domains subfamily A member 13 (Ms4a13) (Mus musculus (Mouse)).